Reading from the N-terminus, the 623-residue chain is Glucokinase regulatory protein (623 aa).

SIS domains are found at residues 90–286 (VQEV…QGVV) and 320–476 (VGIS…VQKF). Beta-D-fructose 1-phosphate contacts are provided by residues 109 to 110 (TS), Glu-153, and 179 to 181 (SVG). Beta-D-fructose 6-phosphate is bound at residue 109–110 (TS). 179-181 (SVG) is a beta-D-fructose 6-phosphate binding site. An important for interaction with GCK region spans residues 199–200 (AV). Residue Glu-348 coordinates beta-D-fructose 1-phosphate. Residues 463 to 465 (LLF) form an essential for interaction with GCK region.

The protein belongs to the GCKR family. As to quaternary structure, interacts (fructose 6-phosphate bound form) with GCK.

The protein localises to the cytoplasm. The protein resides in the nucleus. It localises to the mitochondrion. Functionally, regulates glucokinase (GCK) by forming an inactive complex with this enzyme. Acts by promoting GCK recruitment to the nucleus, possibly to provide a reserve of GCK that can be quickly released in the cytoplasm after a meal. The affinity of GCKR for GCK is modulated by fructose metabolites: GCKR with bound fructose 6-phosphate has increased affinity for GCK, while GCKR with bound fructose 1-phosphate has strongly decreased affinity for GCK and does not inhibit GCK activity. In Mus musculus (Mouse), this protein is Glucokinase regulatory protein.